The chain runs to 783 residues: Cell wall transcription factor ACE2 (783 aa).

Disordered stretches follow at residues 166 to 195, 219 to 311, 355 to 452, 474 to 497, and 535 to 624; these read AINT…ALPD, EEEK…GNSY, YQKQ…IHQN, AEQP…QPEL, and NQNQ…PRRR. Polar residues-rich tracts occupy residues 183–193, 227–254, 302–311, and 355–371; these read GSQTPTPTSAL, QRMM…PQTM, KSDSVGGNSY, and YQKQ…QNDS. Residues 372–395 show a composition bias toward low complexity; that stretch reads QQLEPLKTPQPQPKQQQQQQQPNN. Residues 420–431 show a composition bias toward polar residues; sequence INGSPDWNSSPE. 2 stretches are compositionally biased toward low complexity: residues 483–497 and 535–544; these read PHQQ…QPEL and NQNQNQNQNQ. Polar residues predominate over residues 545 to 575; sequence TKTPYSQQSQFSPTHSNFNLSPAKQLNSNVG. C2H2-type zinc fingers lie at residues 649 to 673 and 679 to 701; these read YTCT…IQTH and FGCQ…VKGH.

Its subcellular location is the nucleus. Transcription factor involved in the RAM (regulation of ACE2 transcription factor and polarized morphogenesis) signaling network that regulates polarized morphogenesis. Regulates expression of genes involved in cell separation such as CHT3, DSE1, and SCW11; or other cell wall genes such as ASH1, DSE4, PIR1, PRY2, and RME1. Required for regulation of morphogenesis, cell separation, adherence, biofilm formation, invasion, as well as virulence in a mouse model of infection. This is Cell wall transcription factor ACE2 (ACE2) from Candida albicans (strain SC5314 / ATCC MYA-2876) (Yeast).